A 628-amino-acid polypeptide reads, in one-letter code: FAD-linked oxidoreductase hmp9 (628 aa).

An N-terminal signal peptide occupies residues Met1–Ala29. The interval Gly34 to Asp53 is disordered. Asn80 and Asn133 each carry an N-linked (GlcNAc...) asparagine glycan. Positions Leu152–Asn337 constitute an FAD-binding PCMH-type domain. Residue Asn356 is glycosylated (N-linked (GlcNAc...) asparagine).

Belongs to the oxygen-dependent FAD-linked oxidoreductase family.

It functions in the pathway secondary metabolite biosynthesis. FAD-linked oxidoreductase; part of the gene cluster that mediates the biosynthesis of hypothemycin, a resorcylic acid lactone (RAL) that irreversibly inhibits a subset of protein kinases with a conserved cysteine in the ATP binding site such as human ERK2. The first step is performed by both PKSs hmp3 and hmp8 and leads to the production of 7',8'-dehydrozearalenol (DHZ). The highly reducing PKS hpm8 synthesizes the reduced hexaketide (7S,11S,2E,8E)-7,11-dihydroxy-dodeca-2,8-dienoate, which is transferred downstream to the non-reducing PKS hpm3. Hpm3 then extends the reduced hexaketide to a nonaketide, after which regioselective cyclization and macrolactonization affords DHZ. The next step is the conversion of DHZ into aigialomycin C and is performed by the O-methyltransferase hmp5, the FAD-binding monooxygenase hmp7, and the cytochrome P450 monooxygenase hmp1. The wide substrate tolerance of the hmp5 and hmp7 implies that the reactions from DHZ to aigialomycin C can occur in any order. The steps from aigialomycin C to hypothemycin are less well established. The FAD-linked oxidoreductase hmp9 presumably catalyzes oxidation of the C-6' hydroxyl to a ketone. The timing of this oxidation is important, since the resulting enone functional group is a Michael acceptor that can react spontaneously with glutathione, an abundant metabolite in fungal cells. The glutathione S-transferase hmp2 catalyzes cis-trans isomerization of the 7',8' double bond with equilibrium favoring the trans isomer. The hpm6-encoded transporter might preferentially pump hypothemycin out of the cell relative to the trans isomer aigialomycin A. The cis-to-trans isomerization may be coupled with C-4' hydroxylation, since all known hypothemycin analogs containing the enone functional group also have hydroxyl groups at both C-4' and C-5'. In Hypomyces subiculosus (Nectria subiculosa), this protein is FAD-linked oxidoreductase hmp9.